The primary structure comprises 263 residues: uncharacterized protein (263 aa).

The protein belongs to the AtsA family.

It is found in the plastid. The protein localises to the chloroplast. This is an uncharacterized protein from Pyropia yezoensis (Susabi-nori).